We begin with the raw amino-acid sequence, 207 residues long: Protein 6b (207 aa).

A disordered region spans residues 160-183; the sequence is GNYTEEGEDDDDEMDDEGEAGGAE. Residues 164 to 178 show a composition bias toward acidic residues; sequence EEGEDDDDEMDDEGE.

Its function is as follows. Involved in tumor formation and increases auxin and cytokinin effects in host plants. This Agrobacterium tumefaciens (strain Ach5) protein is Protein 6b (6b).